The following is a 171-amino-acid chain: MNYGVALFPSKPLQDLANSYRMRYDPHYTLIPPHVTLKEPFELEEQELPSVVKRVREIAKGVDPFPLEVYKVDTFYPVSNTLFFKIREHSALTELYEQLHTSPFKRNEKYSFVPHLTIGQNLSYDELSDNLGRLKMKQIQHEEIVDRIQLLYQLDNGSWTVYETFKLGKEE.

His-34 functions as the Proton donor in the catalytic mechanism. 2 consecutive short sequence motifs (HXTX) follow at residues 34-37 (HVTL) and 115-118 (HLTI). The Proton acceptor role is filled by His-115.

This sequence belongs to the 2H phosphoesterase superfamily. YjcG family.

The chain is Putative phosphoesterase BH1439 from Halalkalibacterium halodurans (strain ATCC BAA-125 / DSM 18197 / FERM 7344 / JCM 9153 / C-125) (Bacillus halodurans).